Here is a 200-residue protein sequence, read N- to C-terminus: Large ribosomal subunit protein uL29 (200 aa).

The segment at 1–107 (MTIAKELKQK…KQETKKAEVK (107 aa)) is large ribosomal subunit protein uL29. Positions 92–200 (STKPESKQET…KMIKTKEKKQ (109 aa)) are disordered. The span at 93-179 (TKPESKQETK…QEVKKVEAKK (87 aa)) shows a compositional bias: basic and acidic residues. Residues 108 to 200 (PKVESKPESK…KMIKTKEKKQ (93 aa)) are unknown. The segment covering 186 to 200 (KPVKAKMIKTKEKKQ) has biased composition (basic residues).

This sequence belongs to the universal ribosomal protein uL29 family.

This Mycoplasma genitalium (strain ATCC 33530 / DSM 19775 / NCTC 10195 / G37) (Mycoplasmoides genitalium) protein is Large ribosomal subunit protein uL29.